A 721-amino-acid polypeptide reads, in one-letter code: Cell wall protein RBT1 (721 aa).

An N-terminal signal peptide occupies residues 1–20 (MRFATAQLAALAYYILSTEA). In terms of domain architecture, Flo11 spans 55-278 (GSKNKREAEI…DCQCDTPSPS (224 aa)). Disordered stretches follow at residues 278–410 (STTT…LTTT), 453–510 (LTET…TVTE), and 555–666 (TPAT…ALVS). Residues 454–499 (TETTPVPSSVDSTSVTSAPETTPESTAPESSAPESSAPESSAPVTE) show a composition bias toward low complexity. Positions 500-510 (TPTGPVSTVTE) are enriched in polar residues. Low complexity-rich tracts occupy residues 555-575 (TPATESASESSAPATESVPAT) and 584-663 (SSAP…KTSA). S696 carries the GPI-anchor amidated serine lipid modification. Positions 697–721 (SFEGAGNNMRLTYGAAIIGLAAFLI) are cleaved as a propeptide — removed in mature form.

Belongs to the HWP1 family. The GPI-anchor is attached to the protein in the endoplasmic reticulum and serves to target the protein to the cell surface. There, the glucosamine-inositol phospholipid moiety is cleaved off and the GPI-modified mannoprotein is covalently attached via its lipidless GPI glycan remnant to the 1,6-beta-glucan of the outer cell wall layer.

The protein resides in the secreted. It is found in the cell wall. Its subcellular location is the membrane. Its function is as follows. GPI-anchored cell wall protein required for mating efficiency, biofilm formation, and virulence. Involved in normal disseminated infection, but not in intestinal colonization. In Candida albicans (strain SC5314 / ATCC MYA-2876) (Yeast), this protein is Cell wall protein RBT1 (RBT1).